Here is a 2259-residue protein sequence, read N- to C-terminus: MKDKRKKKDRTWAEAARLALEKHPNSPMTAKQILEVIQKEGLKETGTSPLACLNAMLHTNTRVGDGTFFKIPGKSGLYALRKEESSCPVDGTLDLVVDPDLDGAEMAEASANGEENRVCTKQVTDEVSSTRDCSLTNTAVQSKLVSSFQQHTKKALKQALRQQQKRRNGVSMMVNKTVPRVVLTPLKVSDEQSDSPSGSESKNGEADSSDKEMKHGQKSPTGKQTSQHLKRLKKSGLGHLKWTKAEDIDIETPGSILVNTNLRALINKHTFASFPQHFQQYLLLLLPEVDRQMGSDGILRLSTSALNNEFFAYAAQGWKQRLAEGEFTPEMQLRIRQEIEKEKKTEPWKEKFFERFYGERSGMSREESIKLTSGPNHEGAEGSSSHGDSGIPGPSAQNALEEQQPKILKSSASLEPDFCTTVCPMLEVPVKDVMTESETEDIFIPEESVIQEEVAEEVETSIYECQDEHLKTIPAFSEESESPATPCEEPQVAAPEDSLESCVVMNDILHTLPHIEVKIVEKLECPQEEMSVVIDQLEICDSLLPCPSSVTHILDVEQKEQETTIETSAMALREGPSSLESQLPNEGIAVDMELQSDPEEQLSENACISETSFSSESPEGACASLPSPGGETQSTSEESCTPASLETTFCSEVSSTENTDKYNQRNPTGESLHASLVSEVSPLATSPEISEASLMSNLPLTSEASPVSNLPLTSEASPMSDLPPTSETSSESSMPLTSETPFVSSLPIPAETSPISNSSVNERMVHQQRKSPSGSEEANSPQKEEPSIPTKPLGESLVSHPKPLSTIPEPINMSSAMVPEALPPEGLHSQTLSQEPCNAHVEMEKLYASSIPELPSSEMTKVKNHSVLQRPEKKGLSAPLEVPVFSEETETKGIELPPAKLQDKQYAPSVDKATFLEGSRNKIHKQSSTLNRLETSHTSKVSEPSKSPDGIRNDNRESEISKRKTVEHSFGICKEKRARIEDDQSARSLASSSPPEKEQPPREEPRVPPLKIQLSKIGPPFIIKSQPVSKAESRASTSTSVSSGRNTGARTLADIKARAQQARAQREAAAAAAVAAAASIVSGAMGSPGEGGKARTLAHIKEQTKAKLFAKHQSRAHLFQTSKETRLPSVSTKEDSLNMEASPTPETKMEGSTGVIIINPNCRSPSSKPTHIREITTVLQQPLNPPQIPETATDLSVHSSDDNIPVSHLTEKIVSSTSSENSSVPILHNKSPINPIPMSVCSTAMSGAIKEHPFVSPVDKSSVLMSVDSANSTISACNISMLKSIQGSDAPCIALVPKCINRTPIPAAPEGTGQSNSMDGKALLVPSSKAANVISNQYTSVPAPTIASNLPNHLCTSSVLIPPTGINNRFVSEKIAMPGSEEQAAVSIGATMRTALSCGDSVAVTDSLVPRSPIAMFAGNMLTANSYNCPPKLSGENLDNNSGPLNRTDNSEKPQQPAGGFVPATINRSIPCKVIVDHSTTLTSNLSLTVSIESGDSSLDSQTRSVRTDVSIQPVACPQVSVISRPEQATSEGLDHGSVFIAAPTAKQDCKTLQATCTSLRELPLTLPDKLNEVTVPTHGFAEQARNSSTFKKETDTACSNQYNPGNRICWSEDPMRNTAPPVVSHSSSSKQKEHPEQTGLKAVKTEHVSYAHVSDLHPRNLITNVSLPVKPEPHEVDKGFRMDTEDFPGPERPPPVTEVTSSASVQPTQTMKPSTTSPVEEAISLAPDTLKRIPSASSSSCRLSSVEANNPLVTQLLQGNLPLEKVLPQPRLGAKLEINRLPLPLQTTSVGKTGLERNMVEMPSSSPNPDGKGYLAGTLAPVQMRKRENHPKKRAARTVGDHAQVKCEPGKMVMEPDVKAVPCVISPSMSQLGHNQPFKQERLNKPSMANRIMPSPEVKQQKRLLPACSFQPSLFHVNKNEGFHADTGTSHRQQFYQMPMAARGPLPTPALLQNSPKTPVGCNAFAFNRHLEQKALGDVNLPTAPHQLRLANMLSPNMPIKEGEDGGGTTHTMPSKAVVHAPLPPPPPPPPPPPPPLALPPPPPPPPPLPPPLPTVEVPSDQKQPPVNMETTKRLSWPQSTGICSNIKSEPLSFEESLSSSCELGMKQVPYDQNEVKEQLKAFALKNADFSSYLLSEPQKPFTQLAAQKLPVPQQQPLCGSYPTIHFGSTNFKRAASAIEKSIGILGSGSNPATSTGLTGQNTQMPVQNFADNSNADELELKCSCRLKAMIVCKGCGAFCHDDCIGPSKLCVACLVVR.

An HTH HARE-type domain is found at 10–83; the sequence is RTWAEAARLA…KSGLYALRKE (74 aa). The disordered stretch occupies residues 181-230; that stretch reads VVLTPLKVSDEQSDSPSGSESKNGEADSSDKEMKHGQKSPTGKQTSQHLK. The span at 202–215 shows a compositional bias: basic and acidic residues; it reads KNGEADSSDKEMKH. A compositionally biased stretch (polar residues) spans 218-227; it reads KSPTGKQTSQ. Positions 253-362 constitute a DEUBAD domain; that stretch reads PGSILVNTNL…FERFYGERSG (110 aa). 10 disordered regions span residues 364-399, 607-643, 703-810, 857-1012, 1025-1049, 1126-1150, 1433-1462, 1614-1643, 1687-1719, and 1993-2075; these read SREE…AQNA, CISE…CTPA, EASP…IPEP, SEMT…PLKI, SQPV…NTGA, RLPS…TKME, LSGE…GGFV, DPMR…GLKA, DFPG…TTSP, and NMLS…TTKR. 3 stretches are compositionally biased toward polar residues: residues 607–617, 630–643, and 703–717; these read CISETSFSSES, GETQ…CTPA, and EASP…SEAS. The span at 722–741 shows a compositional bias: low complexity; sequence LPPTSETSSESSMPLTSETP. Composition is skewed to polar residues over residues 770 to 781 and 926 to 945; these read KSPSGSEEANSP and QSST…SEPS. Composition is skewed to basic and acidic residues over residues 949-985 and 995-1006; these read DGIR…DDQS and PEKEQPPREEPR. A compositionally biased stretch (low complexity) spans 1034-1043; the sequence is RASTSTSVSS. Over residues 1437–1448 the composition is skewed to polar residues; the sequence is NLDNNSGPLNRT. Over residues 1699 to 1719 the composition is skewed to polar residues; the sequence is EVTSSASVQPTQTMKPSTTSP. Residues 2023-2055 show a composition bias toward pro residues; that stretch reads PLPPPPPPPPPPPPPLALPPPPPPPPPLPPPLP. The PHD-type; atypical zinc finger occupies 2221–2258; it reads ELKCSCRLKAMIVCKGCGAFCHDDCIGPSKLCVACLVV.

The protein belongs to the Asx family. As to quaternary structure, core component of the polycomb repressive deubiquitinase (PR-DUB) complex, at least composed of BAP1, one of ASXL1, ASXL2 or (probably) ASXL3, and one of MBD5 or MBD6. Distinct combinations of ASXL and MBD proteins may preferentially bind specific histone modification marks. The PR-DUB core associates with a number of accessory proteins, including FOXK1, FOXK2, KDM1B, HCFC1 and OGT; KDM1B specifically associates with ASXL2 PR-DUB complexes. Interacts (via PHD domain) with MBD5 and MBD6 (via MBD domain); the interaction is probably direct and mediates association of MBD proteins with the PR-DUB core.

It localises to the nucleus. Its function is as follows. Putative Polycomb group (PcG) protein. PcG proteins act by forming multiprotein complexes, which are required to maintain the transcriptionally repressive state of homeotic genes throughout development. PcG proteins are not required to initiate repression, but to maintain it during later stages of development. They probably act via methylation of histones, rendering chromatin heritably changed in its expressibility. Non-catalytic component of the PR-DUB complex, a complex that specifically mediates deubiquitination of histone H2A monoubiquitinated at 'Lys-119' (H2AK119ub1). The PR-DUB complex is an epigenetic regulator of gene expression and acts as a transcriptional coactivator, affecting genes involved in development, cell communication, signaling, cell proliferation and cell viability. ASXL1, ASXL2 and ASXL3 function redundantly in the PR-DUB complex and are essential for chromatin recruitment and transcriptional activation of associated genes. This is Putative Polycomb group protein ASXL3 (Asxl3) from Mus musculus (Mouse).